We begin with the raw amino-acid sequence, 689 residues long: Elongation factor G (689 aa).

Positions 8–282 (KKTRNIGIMA…AVIDYLPSPV (275 aa)) constitute a tr-type G domain. GTP contacts are provided by residues 17–24 (AHIDAGKT), 81–85 (DTPGH), and 135–138 (NKMD).

Belongs to the TRAFAC class translation factor GTPase superfamily. Classic translation factor GTPase family. EF-G/EF-2 subfamily.

The protein localises to the cytoplasm. In terms of biological role, catalyzes the GTP-dependent ribosomal translocation step during translation elongation. During this step, the ribosome changes from the pre-translocational (PRE) to the post-translocational (POST) state as the newly formed A-site-bound peptidyl-tRNA and P-site-bound deacylated tRNA move to the P and E sites, respectively. Catalyzes the coordinated movement of the two tRNA molecules, the mRNA and conformational changes in the ribosome. The polypeptide is Elongation factor G (Halothermothrix orenii (strain H 168 / OCM 544 / DSM 9562)).